Reading from the N-terminus, the 182-residue chain is Small ribosomal subunit protein uS4c (182 aa).

The segment at 13 to 34 (GLTSKRPRSGSDPKNQLRSGKR) is disordered. In terms of domain architecture, S4 RNA-binding spans 82–143 (MRLDNILFRL…KQRSKALIQN (62 aa)).

Belongs to the universal ribosomal protein uS4 family. In terms of assembly, part of the 30S ribosomal subunit. Contacts protein S5. The interaction surface between S4 and S5 is involved in control of translational fidelity.

The protein resides in the plastid. The protein localises to the chloroplast. One of the primary rRNA binding proteins, it binds directly to 16S rRNA where it nucleates assembly of the body of the 30S subunit. Functionally, with S5 and S12 plays an important role in translational accuracy. This is Small ribosomal subunit protein uS4c (rps4) from Iris lutescens (Crimean iris).